The sequence spans 419 residues: Transcription termination factor Rho (419 aa).

One can recognise a Rho RNA-BD domain in the interval 48 to 123 (DIFGDGVLEI…LKVNEVNYDK (76 aa)). RNA-binding regions lie at residues 61 to 66 (GFGFLR), 78 to 80 (DIY), and 108 to 110 (ERY). ATP-binding positions include 169 to 174 (GRGQRG), 181 to 186 (KAGKTM), and Arg-212. The tract at residues 284–288 (VLTGG) is RNA-binding 2.

The protein belongs to the Rho family. In terms of assembly, homohexamer. The homohexamer assembles into an open ring structure.

In terms of biological role, facilitates transcription termination by a mechanism that involves Rho binding to the nascent RNA, activation of Rho's RNA-dependent ATPase activity, and release of the mRNA from the DNA template. In Salmonella typhi, this protein is Transcription termination factor Rho.